A 633-amino-acid chain; its full sequence is tRNA uridine 5-carboxymethylaminomethyl modification enzyme MnmG (633 aa).

FAD is bound at residue 18 to 23 (GAGHAG). Positions 208–232 (PRVNGNTIDFDKTEEQPGDKTPNHF) are disordered. The span at 216 to 229 (DFDKTEEQPGDKTP) shows a compositional bias: basic and acidic residues. 279–293 (GPRYCPSIEDKIVRF) contacts NAD(+).

Belongs to the MnmG family. As to quaternary structure, homodimer. Heterotetramer of two MnmE and two MnmG subunits. Requires FAD as cofactor.

The protein resides in the cytoplasm. Its function is as follows. NAD-binding protein involved in the addition of a carboxymethylaminomethyl (cmnm) group at the wobble position (U34) of certain tRNAs, forming tRNA-cmnm(5)s(2)U34. This is tRNA uridine 5-carboxymethylaminomethyl modification enzyme MnmG from Lacticaseibacillus paracasei (strain ATCC 334 / BCRC 17002 / CCUG 31169 / CIP 107868 / KCTC 3260 / NRRL B-441) (Lactobacillus paracasei).